Consider the following 146-residue polypeptide: Hemoglobin subunit beta (146 aa).

Val-1 carries the post-translational modification N-acetylvaline. Residues His-2–His-146 enclose the Globin domain. The residue at position 59 (Lys-59) is an N6-acetyllysine. His-63 provides a ligand contact to heme b. At Lys-82 the chain carries N6-acetyllysine. His-92 contributes to the heme b binding site. The residue at position 93 (Cys-93) is an S-nitrosocysteine. At Lys-144 the chain carries N6-acetyllysine.

Belongs to the globin family. In terms of assembly, heterotetramer of two alpha chains and two beta chains. In terms of tissue distribution, red blood cells.

In terms of biological role, involved in oxygen transport from the lung to the various peripheral tissues. The chain is Hemoglobin subunit beta (HBB) from Ondatra zibethicus (Muskrat).